Reading from the N-terminus, the 444-residue chain is Tubulin beta chain (444 aa).

GTP is bound by residues Q11, E69, S138, G142, T143, G144, N204, and N226. E69 contributes to the Mg(2+) binding site.

The protein belongs to the tubulin family. Dimer of alpha and beta chains. A typical microtubule is a hollow water-filled tube with an outer diameter of 25 nm and an inner diameter of 15 nM. Alpha-beta heterodimers associate head-to-tail to form protofilaments running lengthwise along the microtubule wall with the beta-tubulin subunit facing the microtubule plus end conferring a structural polarity. Microtubules usually have 13 protofilaments but different protofilament numbers can be found in some organisms and specialized cells. Mg(2+) serves as cofactor.

The protein localises to the cytoplasm. Its subcellular location is the cytoskeleton. In terms of biological role, tubulin is the major constituent of microtubules, a cylinder consisting of laterally associated linear protofilaments composed of alpha- and beta-tubulin heterodimers. Microtubules grow by the addition of GTP-tubulin dimers to the microtubule end, where a stabilizing cap forms. Below the cap, tubulin dimers are in GDP-bound state, owing to GTPase activity of alpha-tubulin. The polypeptide is Tubulin beta chain (Phytophthora cinnamomi (Cinnamon fungus)).